A 1401-amino-acid chain; its full sequence is Lysine-specific demethylase 6A (1401 aa).

The tract at residues 1–1095 (MKSCGVSLAT…TNIDLSDDKK (1095 aa)) is interaction with SUPT6H. TPR repeat units follow at residues 93-126 (SDFF…QSDY), 130-163 (AAFL…DPSF), 170-199 (HLRL…DCNP), 205-238 (AEIQ…ENLS), 250-283 (GWMH…DPNS), 284-317 (GQSW…SEAS), 318-351 (ADTW…DHGH), and 352-385 (AAAW…KSCS). Residues 437-449 (AMNTAQQNTSDNW) show a composition bias toward polar residues. The tract at residues 437 to 457 (AMNTAQQNTSDNWSGGHAVSH) is disordered. An Omega-N-methylarginine modification is found at Arg519. The tract at residues 521–541 (TGIPNGPTADSSLPTNSVSGQ) is disordered. Residue Arg549 is modified to Omega-N-methylarginine. Composition is skewed to polar residues over residues 624–652 (LTSS…SHSA) and 660–724 (LSST…SGNI). Disordered stretches follow at residues 624-746 (LTSS…SVEG), 758-778 (AVCS…SDNP), 810-864 (KTDN…ESQS), 914-940 (LLDK…NPPT), and 1043-1079 (FQES…KGPF). Phosphoserine is present on Ser769. The span at 814 to 833 (SVASSPSSAISTATPSPKST) shows a compositional bias: low complexity. A Phosphothreonine modification is found at Thr827. A Phosphoserine modification is found at Ser829. The span at 834–848 (EQTTTNSVTSLNSPH) shows a compositional bias: polar residues. Over residues 918-931 (CPPPRPPSSPYPPL) the composition is skewed to pro residues. Residues 1046 to 1063 (SLREENEKRSHHKDHSDS) are compositionally biased toward basic and acidic residues. The 164-residue stretch at 1095–1258 (KWKLQLHELT…YKLAVERYEW (164 aa)) folds into the JmjC domain. 3 residues coordinate Fe cation: His1146, Glu1148, and His1226. 4 residues coordinate Zn(2+): Cys1331, Cys1334, Cys1358, and Cys1361.

The protein belongs to the UTX family. Interacts with TLE1. Component of the MLL2/3 complex (also named ASCOM complex), at least composed of KMT2D/MLL2 or KMT2C/MLL3, ASH2L, RBBP5, WDR5, NCOA6, DPY30, KDM6A (or KDM6B), PAXIP1/PTIP, PAGR1 and alpha- and beta-tubulin. Interacts with SUPT6H. Interacts with SMARCA4. Interacts with PROSER1. It depends on L-ascorbate as a cofactor. The cofactor is Fe(2+).

It is found in the nucleus. The enzyme catalyses N(6),N(6),N(6)-trimethyl-L-lysyl(27)-[histone H3] + 2 2-oxoglutarate + 2 O2 = N(6)-methyl-L-lysyl(27)-[histone H3] + 2 formaldehyde + 2 succinate + 2 CO2. Its function is as follows. Histone demethylase that specifically demethylates 'Lys-27' of histone H3, thereby playing a central role in histone code. Demethylates trimethylated and dimethylated but not monomethylated H3 'Lys-27'. Plays a central role in regulation of posterior development, by regulating HOX gene expression. Demethylation of 'Lys-27' of histone H3 is concomitant with methylation of 'Lys-4' of histone H3, and regulates the recruitment of the PRC1 complex and monoubiquitination of histone H2A. Plays a demethylase-independent role in chromatin remodeling to regulate T-box family member-dependent gene expression. In Homo sapiens (Human), this protein is Lysine-specific demethylase 6A (KDM6A).